Here is a 445-residue protein sequence, read N- to C-terminus: Xylose isomerase (445 aa).

Catalysis depends on residues His-99 and Asp-102. Positions 230, 266, 269, 294, 305, 307, and 337 each coordinate Mg(2+).

The protein belongs to the xylose isomerase family. Homotetramer. Requires Mg(2+) as cofactor.

Its subcellular location is the cytoplasm. The catalysed reaction is alpha-D-xylose = alpha-D-xylulofuranose. The chain is Xylose isomerase from Geobacillus thermodenitrificans (strain NG80-2).